A 313-amino-acid chain; its full sequence is tRNA-cytidine(32) 2-sulfurtransferase (313 aa).

The short motif at 46 to 51 is the PP-loop motif element; that stretch reads SGGKDS. [4Fe-4S] cluster contacts are provided by Cys121, Cys124, and Cys212.

The protein belongs to the TtcA family. As to quaternary structure, homodimer. Mg(2+) is required as a cofactor. [4Fe-4S] cluster serves as cofactor.

Its subcellular location is the cytoplasm. It catalyses the reaction cytidine(32) in tRNA + S-sulfanyl-L-cysteinyl-[cysteine desulfurase] + AH2 + ATP = 2-thiocytidine(32) in tRNA + L-cysteinyl-[cysteine desulfurase] + A + AMP + diphosphate + H(+). Its pathway is tRNA modification. In terms of biological role, catalyzes the ATP-dependent 2-thiolation of cytidine in position 32 of tRNA, to form 2-thiocytidine (s(2)C32). The sulfur atoms are provided by the cysteine/cysteine desulfurase (IscS) system. The protein is tRNA-cytidine(32) 2-sulfurtransferase of Nitrosomonas eutropha (strain DSM 101675 / C91 / Nm57).